A 293-amino-acid polypeptide reads, in one-letter code: MPWIQLRINTNSDDAETISDLLMEEGSVSITFEDGKDTPIFEPKLGETPLWRDTVVVALFEADTDLTPTIEMLKTLPFLGDNFSHKIEQIEDKDWVREWMDNFHPIQFGSRLWICPSWREIPDPTAVNVILDPGLAFGTGTHPTTALCLEWLDSLDLSNEEVIDFGCGSGILAVAALKLGAKKVTGIDIDYQAIDASRANAERNNVADKLALYLPEDQPADLKADVLVANILAGPLRELAPLIAERVKSGGKLALSGLLKEQAQEISDFYSQWFDMDEAAHKEDWSRLTGKRK.

S-adenosyl-L-methionine contacts are provided by Thr145, Gly166, Asp188, and Asn230.

It belongs to the methyltransferase superfamily. PrmA family.

The protein localises to the cytoplasm. It carries out the reaction L-lysyl-[protein] + 3 S-adenosyl-L-methionine = N(6),N(6),N(6)-trimethyl-L-lysyl-[protein] + 3 S-adenosyl-L-homocysteine + 3 H(+). Functionally, methylates ribosomal protein L11. The sequence is that of Ribosomal protein L11 methyltransferase from Shewanella putrefaciens (strain CN-32 / ATCC BAA-453).